The primary structure comprises 250 residues: 2,5-dichloro-2,5-cyclohexadiene-1,4-diol dehydrogenase (250 aa).

9 to 34 (IIVTGGGSGIGRATVELLVASGANVA) lines the NAD(+) pocket. Residue serine 141 participates in substrate binding. The active-site Proton acceptor is tyrosine 154.

It belongs to the short-chain dehydrogenases/reductases (SDR) family.

It catalyses the reaction 2,5-dichlorocyclohexa-2,5-dien-1,4-diol + NAD(+) = 2,5-dichlorohydroquinone + NADH + H(+). The protein operates within xenobiotic degradation; gamma-hexachlorocyclohexane degradation. Functionally, catalyzes the dehydrogenation of 2,5-dichloro-2,5-cyclohexadiene-1,4-diol (2,5-DDOL) to 2,5-dichlorohydroquinone (2,5-DCHQ), a step in the degradation of gamma-hexachlorocyclohexane (gamma-HCH or lindane). Has an essential role in this assimilation pathway that allows S.japonicum UT26 to grow on gamma-HCH as the sole source of carbon and energy. In Sphingobium indicum (strain DSM 16413 / CCM 7287 / MTCC 6362 / UT26 / NBRC 101211 / UT26S) (Sphingobium japonicum), this protein is 2,5-dichloro-2,5-cyclohexadiene-1,4-diol dehydrogenase.